Consider the following 211-residue polypeptide: Urease accessory protein UreF (211 aa).

Residues 68–93 (LAPDGADRETDARTPSPAARDASRSQ) form a disordered region.

It belongs to the UreF family. UreD, UreF and UreG form a complex that acts as a GTP-hydrolysis-dependent molecular chaperone, activating the urease apoprotein by helping to assemble the nickel containing metallocenter of UreC. The UreE protein probably delivers the nickel.

It localises to the cytoplasm. Functionally, required for maturation of urease via the functional incorporation of the urease nickel metallocenter. This is Urease accessory protein UreF from Mycobacterium marinum (strain ATCC BAA-535 / M).